Consider the following 125-residue polypeptide: Methylglyoxal synthase (125 aa).

Residues 1 to 125 (MTQRLRIALI…TAEKLVRALD (125 aa)) enclose the MGS-like domain. Substrate-binding positions include His-12, Lys-16, 38–41 (TGTT), and 59–60 (SG). The active-site Proton donor/acceptor is the Asp-65. His-92 contacts substrate.

It belongs to the methylglyoxal synthase family.

The catalysed reaction is dihydroxyacetone phosphate = methylglyoxal + phosphate. In terms of biological role, catalyzes the formation of methylglyoxal from dihydroxyacetone phosphate. The protein is Methylglyoxal synthase of Brucella abortus (strain S19).